A 702-amino-acid chain; its full sequence is MSKKWNIDMVRNIGISAHIDSGKTTTSERILFYGGRIHAIHEVRGKDGVGATMDSMDLEREKGITIQSAATQVQWKDYTINLIDTPGHVDFTVEVERSLRVLDGAILLLCGVAGVQSQSITVDRQMKRYNVPRLAFVNKLDRQGANPYRVTDALIEKLRLNAVMIQIPIGLEDQHRGHVDLTDMKAYINQGESGENVLVEEIPADLVETAKKYRQIMIGKLADVDSAIEEKFLMEEEPTTEEIRAAIRKGTIGLKLVPVLCGSAFKNKGVQRLMDAVTYYLPSPAEKKEQALDITKNEEKFDLHPDPTKPLVALAFKLQETPFGQLTYMRVYQGKMGKGDFIVNQVNKKSVKIPRLVRMHSDKMEDIDVSYAGDIVALFGIDCASGDTFCDENIQASMQSMHVPDSVISLAIAPKDKTAANNFSKALQKFRKEDPTFRVHRDEESNETIISGMGELHLEIYVERMKREFNCEVIVGQPQVAYRETISVEAPYDYTHKKQTGGSGQYAKIVGKIQPLPPQEDGAVFKFENKVVGGRIPKEFIPAVEEGFKEQTVKGPLIGFPIVGVEVVLEDGAYHDVDSSYMAFKIAGMAALREVYASAKPTVLEPIMKLETTVPDEYQGSAVGQINQRRGSIVATTAFEGNCVIEAEVPLTEMFGYSTDLRSATKGKGEFSMEFAKYAPVPRNIQEELAKKYQAKRAAEQK.

The tr-type G domain maps to 8 to 285 (DMVRNIGISA…AVTYYLPSPA (278 aa)). Residues 17-24 (AHIDSGKT), 84-88 (DTPGH), and 138-141 (NKLD) contribute to the GTP site.

Belongs to the TRAFAC class translation factor GTPase superfamily. Classic translation factor GTPase family. EF-G/EF-2 subfamily.

Its subcellular location is the cytoplasm. In terms of biological role, catalyzes the GTP-dependent ribosomal translocation step during translation elongation. During this step, the ribosome changes from the pre-translocational (PRE) to the post-translocational (POST) state as the newly formed A-site-bound peptidyl-tRNA and P-site-bound deacylated tRNA move to the P and E sites, respectively. Catalyzes the coordinated movement of the two tRNA molecules, the mRNA and conformational changes in the ribosome. The sequence is that of Elongation factor G 2 from Bdellovibrio bacteriovorus (strain ATCC 15356 / DSM 50701 / NCIMB 9529 / HD100).